The following is a 141-amino-acid chain: Proteasome maturation protein (141 aa).

Residue Lys-39 forms a Glycyl lysine isopeptide (Lys-Gly) (interchain with G-Cter in SUMO2) linkage.

Belongs to the POMP/UMP1 family. In terms of assembly, constituent of preproteasomes, but not of mature 20S proteasomes. Within the preproteasome, may directly interact with PSMB1/beta6, PSMB4/beta7, PSMB5/beta5, PSMB6/beta1 and PSMB9/beta1i. Interaction with PSMB8/beta5i is controversial. Forms tetramers.

The protein localises to the cytoplasm. It localises to the cytosol. Its subcellular location is the nucleus. The protein resides in the microsome membrane. Molecular chaperone essential for the assembly of standard proteasomes and immunoproteasomes. Degraded after completion of proteasome maturation. Mediates the association of 20S preproteasome with the endoplasmic reticulum. The sequence is that of Proteasome maturation protein (POMP) from Bos taurus (Bovine).